The primary structure comprises 524 residues: Cytochrome P450 4F12 (524 aa).

Transmembrane regions (helical) follow at residues 19-39 and 87-107; these read WLLLLLVVGSWLLARILAWTY and GFTVWLGPIIPFIVLCHPDTI. Cysteine 468 lines the heme pocket.

It belongs to the cytochrome P450 family. The cofactor is heme. In terms of tissue distribution, expressed in small intestine, liver, colon and heart.

The protein resides in the endoplasmic reticulum membrane. It localises to the microsome membrane. The catalysed reaction is an organic molecule + reduced [NADPH--hemoprotein reductase] + O2 = an alcohol + oxidized [NADPH--hemoprotein reductase] + H2O + H(+). It carries out the reaction (5Z,8Z,11Z,14Z)-eicosatetraenoate + reduced [NADPH--hemoprotein reductase] + O2 = 18-hydroxy-(5Z,8Z,11Z,14Z)-eicosatetraenoate + oxidized [NADPH--hemoprotein reductase] + H2O + H(+). It catalyses the reaction (7Z,10Z,13Z,16Z,19Z)-docosapentaenoate + reduced [NADPH--hemoprotein reductase] + O2 = 10,11-epoxy-(7Z,13Z,16Z,19Z)-docosatetraenoate + oxidized [NADPH--hemoprotein reductase] + H2O + H(+). The enzyme catalyses (7Z,10Z,13Z,16Z,19Z)-docosapentaenoate + reduced [NADPH--hemoprotein reductase] + O2 = 13,14-epoxy-(7Z,10Z,16Z,19Z)-docosatetraenoate + oxidized [NADPH--hemoprotein reductase] + H2O + H(+). The catalysed reaction is (7Z,10Z,13Z,16Z,19Z)-docosapentaenoate + reduced [NADPH--hemoprotein reductase] + O2 = 16,17-epoxy-(7Z,10Z,13Z,19Z)-docosatetraenoate + oxidized [NADPH--hemoprotein reductase] + H2O + H(+). It carries out the reaction (7Z,10Z,13Z,16Z,19Z)-docosapentaenoate + reduced [NADPH--hemoprotein reductase] + O2 = 19,20-epoxy-(7Z,10Z,13Z,16Z)-docosatetraenoate + oxidized [NADPH--hemoprotein reductase] + H2O + H(+). It catalyses the reaction (4Z,7Z,10Z,13Z,16Z,19Z)-docosahexaenoate + reduced [NADPH--hemoprotein reductase] + O2 = 10,11-epoxy-(4Z,7Z,13Z,16Z,19Z)-docosapentaenoate + oxidized [NADPH--hemoprotein reductase] + H2O + H(+). The enzyme catalyses (4Z,7Z,10Z,13Z,16Z,19Z)-docosahexaenoate + reduced [NADPH--hemoprotein reductase] + O2 = 13,14-epoxy-(4Z,7Z,10Z,16Z,19Z)-docosapentaenoate + oxidized [NADPH--hemoprotein reductase] + H2O + H(+). The catalysed reaction is (4Z,7Z,10Z,13Z,16Z,19Z)-docosahexaenoate + reduced [NADPH--hemoprotein reductase] + O2 = 16,17-epoxy-(4Z,7Z,10Z,13Z,19Z)-docosapentaenoate + oxidized [NADPH--hemoprotein reductase] + H2O + H(+). It carries out the reaction (4Z,7Z,10Z,13Z,16Z,19Z)-docosahexaenoate + reduced [NADPH--hemoprotein reductase] + O2 = 19,20-epoxy-(4Z,7Z,10Z,13Z,16Z)-docosapentaenoate + oxidized [NADPH--hemoprotein reductase] + H2O + H(+). Its pathway is lipid metabolism; arachidonate metabolism. Its function is as follows. A cytochrome P450 monooxygenase involved in the metabolism of endogenous polyunsaturated fatty acids (PUFAs). Mechanistically, uses molecular oxygen inserting one oxygen atom into a substrate, and reducing the second into a water molecule, with two electrons provided by NADPH via cytochrome P450 reductase (CPR; NADPH-ferrihemoprotein reductase). Catalyzes the hydroxylation of carbon hydrogen bonds, with preference for omega-2 position. Metabolizes (5Z,8Z,11Z,14Z)-eicosatetraenoic acid (arachidonate) toward 18-hydroxy arachidonate. Catalyzes the epoxidation of double bonds of PUFAs such as docosapentaenoic and docosahexaenoic acids. Has low omega-hydroxylase activity toward leukotriene B4 and arachidonate. Involved in the metabolism of xenobiotics. Catalyzes the hydroxylation of the antihistamine drug ebastine. The chain is Cytochrome P450 4F12 from Homo sapiens (Human).